A 154-amino-acid chain; its full sequence is Probable deoxyuridine 5'-triphosphate nucleotidohydrolase (154 aa).

Belongs to the dCTP deaminase family. Archaeal dUTPase subfamily.

It carries out the reaction dUTP + H2O = dUMP + diphosphate + H(+). Its pathway is pyrimidine metabolism; dUMP biosynthesis; dUMP from dCTP (dUTP route): step 2/2. Its function is as follows. This enzyme is involved in nucleotide metabolism: it produces dUMP, the immediate precursor of thymidine nucleotides and it decreases the intracellular concentration of dUTP so that uracil cannot be incorporated into DNA. The protein is Probable deoxyuridine 5'-triphosphate nucleotidohydrolase of Methanopyrus kandleri (strain AV19 / DSM 6324 / JCM 9639 / NBRC 100938).